The sequence spans 532 residues: Aspartate--tRNA ligase 1, cytoplasmic (532 aa).

Positions 7 to 41 form a coiled coil; it reads LEECGEKISKKESKKRAAKLEKLLRKQEREEATSS. A disordered region spans residues 31-58; the sequence is RKQEREEATSSSLSLEEEDESCSSNYGD. A DNA-binding region (OB) is located at residues 88 to 169; it reads VSIRGRLHKN…QVEIHVRKMY (82 aa). Glu260 is an L-aspartate binding site. Residues 282–285 form an aspartate region; sequence QLHK. Residue Arg304 coordinates L-aspartate. ATP is bound by residues 304–306, 312–314, and Glu455; these read RAE and RHL. Mg(2+)-binding residues include Glu455 and Ser458. L-aspartate contacts are provided by Ser458 and Arg462. Residue 503-506 participates in ATP binding; sequence GLER.

The protein belongs to the class-II aminoacyl-tRNA synthetase family. Type 2 subfamily.

It localises to the cytoplasm. The protein localises to the cytosol. It catalyses the reaction tRNA(Asp) + L-aspartate + ATP = L-aspartyl-tRNA(Asp) + AMP + diphosphate. Its function is as follows. Catalyzes the specific attachment of an amino acid to its cognate tRNA in a 2 step reaction: the amino acid (AA) is first activated by ATP to form AA-AMP and then transferred to the acceptor end of the tRNA. The polypeptide is Aspartate--tRNA ligase 1, cytoplasmic (Arabidopsis thaliana (Mouse-ear cress)).